Here is a 431-residue protein sequence, read N- to C-terminus: MSLMTKLGFRALVASCLITAGSAANAQVNVLITGVGSTQFPIATANFTNEANLPQQVTSIVRADLARSGKFTNIDAGSTPVPETASVDLGAWKAKGANAFVAGSVNRDANGQYKVNFILYDTVKQQSLGGLSLTATDTTLRTAGHKIADYIYQKLLGVRGVFATRLSYVIKTGNRYQLQISDSDGQNARIALSSTEPIISPAWSPSGTKVAYVSFERKKPIVYIHDLPTGRRYMVSDQKGNNSAPAWSPDSNTLAVALSLTGNTQIYTVNANGGGLRRLTQSSSIDTEPFYSPDGRWIYFTSDRGGAPQIYRMPAQGESAGAAQRVTFTGSYNTSPRVSPDGKLLAYISRTGGGFKLYVQDLQTGAANAITNTNRDESPSFAANGQYVLYATQSGGRNVLAAVPSDGSAPPQILSVQGGSVREPSWGPFMQ.

The N-terminal stretch at 1–26 (MSLMTKLGFRALVASCLITAGSAANA) is a signal peptide. Positions 406–431 (DGSAPPQILSVQGGSVREPSWGPFMQ) are disordered.

Belongs to the TolB family. In terms of assembly, the Tol-Pal system is composed of five core proteins: the inner membrane proteins TolA, TolQ and TolR, the periplasmic protein TolB and the outer membrane protein Pal. They form a network linking the inner and outer membranes and the peptidoglycan layer.

It localises to the periplasm. Its function is as follows. Part of the Tol-Pal system, which plays a role in outer membrane invagination during cell division and is important for maintaining outer membrane integrity. The sequence is that of Tol-Pal system protein TolB from Burkholderia cenocepacia (strain HI2424).